We begin with the raw amino-acid sequence, 535 residues long: NAD(P)H-quinone oxidoreductase chain 4 2 (535 aa).

The next 14 membrane-spanning stretches (helical) occupy residues 9–29 (FPWL…IPLI), 51–71 (WFAL…FYVG), 106–126 (LILL…PVTL), 130–150 (LFYF…AVQD), 152–172 (LLFF…LSIW), 184–204 (FILY…AMAF), 227–247 (LLLY…FPLH), 258–278 (TAPV…YALM), 290–310 (LYFA…AALT), 326–346 (ISHM…GMSG), 347–367 (AMLQ…LVGA), 399–419 (LASL…VFIG), 432–452 (LVVV…LLSM), and 479–499 (VFII…PKLV).

The protein belongs to the complex I subunit 4 family.

Its subcellular location is the cellular thylakoid membrane. The catalysed reaction is a plastoquinone + NADH + (n+1) H(+)(in) = a plastoquinol + NAD(+) + n H(+)(out). It carries out the reaction a plastoquinone + NADPH + (n+1) H(+)(in) = a plastoquinol + NADP(+) + n H(+)(out). Its function is as follows. NDH-1 shuttles electrons from NAD(P)H, via FMN and iron-sulfur (Fe-S) centers, to quinones in the respiratory chain. The immediate electron acceptor for the enzyme in this species is believed to be plastoquinone. Couples the redox reaction to proton translocation (for every two electrons transferred, four hydrogen ions are translocated across the cytoplasmic membrane), and thus conserves the redox energy in a proton gradient. The protein is NAD(P)H-quinone oxidoreductase chain 4 2 of Synechococcus sp. (strain JA-3-3Ab) (Cyanobacteria bacterium Yellowstone A-Prime).